A 241-amino-acid chain; its full sequence is Ribosome-inactivating protein luffaculin 1 (241 aa).

Residues Asn-28, Asn-33, Asn-77, and Asn-84 are each glycosylated (N-linked (GlcNAc...) asparagine). Glu-159 is a catalytic residue. An N-linked (GlcNAc...) asparagine glycan is attached at Asn-205.

This sequence belongs to the ribosome-inactivating protein family. Type 1 RIP subfamily.

It catalyses the reaction Endohydrolysis of the N-glycosidic bond at one specific adenosine on the 28S rRNA.. In Luffa acutangula (Ridged gourd), this protein is Ribosome-inactivating protein luffaculin 1.